Consider the following 172-residue polypeptide: MDLKQYVSEVQDWPKPGVSFKDITTIMDNGEAYGYATNKIVEYAKDRDVDIVVGPEARGFIIGCPVAYSMGIGFAPVRKEGKLPREVIRYEYDLEYGTNVLTMHKDAIKPGQRVLITDDLLATGGTIEAAIKLVEKLGGIVVGIAFIIELKYLNGIEKIKDYDVMSLISYDE.

It belongs to the purine/pyrimidine phosphoribosyltransferase family. In terms of assembly, homodimer.

It is found in the cytoplasm. The catalysed reaction is AMP + diphosphate = 5-phospho-alpha-D-ribose 1-diphosphate + adenine. It functions in the pathway purine metabolism; AMP biosynthesis via salvage pathway; AMP from adenine: step 1/1. Its function is as follows. Catalyzes a salvage reaction resulting in the formation of AMP, that is energically less costly than de novo synthesis. In Staphylococcus aureus (strain bovine RF122 / ET3-1), this protein is Adenine phosphoribosyltransferase.